The following is a 577-amino-acid chain: Protein hinderin (577 aa).

Phosphoserine is present on serine 21. A coiled-coil region spans residues 91 to 167 (LKDLCLEDKR…CQELLSLYQK (77 aa)). Serine 179 is modified (phosphoserine). The disordered stretch occupies residues 251–282 (TLHHPKDDLDKIPSETTTCNCESPGRKPAVPT). Basic and acidic residues predominate over residues 254–263 (HPKDDLDKIP). Residues 358-402 (LKKQISEDRKQQLMLQKMELEIEKERLQHLLAQQETKLLLKQQQL) are a coiled coil. Disordered regions lie at residues 425–444 (SSSI…RKER), 449–492 (FHSH…GSLK), and 520–540 (LSPN…GAWN). Residues 449–468 (FHSHMKDDAQWSCQKKDTCR) are compositionally biased toward basic and acidic residues. Phosphoserine occurs at positions 490 and 521.

As to quaternary structure, interacts (via N- and C-terminal domains) with SMC3 (via central hinge region). As to expression, widely expressed.

Functionally, competes with SMC1 for binding to SMC3. May affect the availability of SMC3 to engage in the formation of multimeric protein complexes. This Homo sapiens (Human) protein is Protein hinderin (KIAA1328).